Reading from the N-terminus, the 444-residue chain is MESVETPVKDGLLYQQHMKFGKKCWRKVWALLYAGGPSGVARLESWDVRDGGLGPGGDRPAGPGRRGERRIIRLADCVSVLPADGESCPRDTGAFLITTTERSHLLAAQHRQSWMDPICQLAFPSTGECSSGSGQAESPKRGFVPMEENSIYSSWQEVAEFPVVVQRTEATTRCQLKGPYLLVLGQDDIQLRETSKPQACYSWPYRFLRKFGSDKGVFSFEAGRRCDSGEGLFAFSSPRAPDICGAVAAAIARQRERLPELAMSPPCPLPRALSLPSLEPPGELREVAPEYELAPSRKLPLTDPGPQSLPLLLSPTQDGTASSLYASVCKQTSKHKATVEHLYENVFMLEASPGLSNGGPEAQEGPPGGRSPLGSPIYHNSEELSWPGSAHDSNLEAQYRRLLELELDDAGGAGRPGAQTGIKAKLVTLLTRERKKGPAPCDRP.

The 117-residue stretch at 7–123 (PVKDGLLYQQ…WMDPICQLAF (117 aa)) folds into the PH domain. Residues 47–66 (DVRDGGLGPGGDRPAGPGRR) are disordered. Phosphoserine is present on Ser138. The IRS-type PTB domain occupies 157–261 (EVAEFPVVVQ…ARQRERLPEL (105 aa)). Residues Ser274, Ser308, and Ser314 each carry the phosphoserine modification. The residue at position 325 (Tyr325) is a Phosphotyrosine. The segment at 354–390 (GLSNGGPEAQEGPPGGRSPLGSPIYHNSEELSWPGSA) is disordered. A compositionally biased stretch (low complexity) spans 358 to 376 (GGPEAQEGPPGGRSPLGSP). Ser371 carries the post-translational modification Phosphoserine.

The protein belongs to the DOK family. Type A subfamily. In terms of assembly, on tyrosine phosphorylation, interacts with CSK and INPP5D/SHIP1 via their SH2 domains. Binds ABL1 through the PTB domain and in a kinase-dependent manner. Does not interact with RasGAP. In terms of processing, constitutively tyrosine-phosphorylated. On IL2 stimulation, phosphorylated on C-terminal tyrosine residues possibly by Src kinases. Can also be phosphorylated by ABL1 kinase.

The protein localises to the cytoplasm. Its subcellular location is the cell membrane. Functionally, DOK proteins are enzymatically inert adaptor or scaffolding proteins. They provide a docking platform for the assembly of multimolecular signaling complexes. DOK3 is a negative regulator of JNK signaling in B-cells through interaction with INPP5D/SHIP1. May modulate ABL1 function. The protein is Docking protein 3 (Dok3) of Rattus norvegicus (Rat).